Consider the following 68-residue polypeptide: Medusin-DA1 (68 aa).

A signal peptide spans 1 to 22; that stretch reads MAFLKKSLFLVLFLGLVSLSVC. Positions 23–48 are excised as a propeptide; that stretch reads EEEKRENEEEKNEQEEDDREERNEEK. Residues 25 to 47 are disordered; it reads EKRENEEEKNEQEEDDREERNEE. A compositionally biased stretch (acidic residues) spans 31-41; the sequence is EEKNEQEEDDR. Leu-67 carries the leucine amide modification.

It belongs to the frog skin active peptide (FSAP) family. Medusin subfamily. In terms of tissue distribution, expressed by the skin glands.

The protein localises to the secreted. Functionally, antimicrobial peptide with activity against Gram-positive bacteria (S.aureus, MIC=32 mg/L) and fungi (C.albicans, MIC=64 mg/L). Shows weak hemolytic activity. The sequence is that of Medusin-DA1 from Agalychnis dacnicolor (Giant Mexican leaf frog).